Here is a 595-residue protein sequence, read N- to C-terminus: Merlin (595 aa).

Ser13 carries the post-translational modification Phosphoserine. The 290-residue stretch at 22–311 folds into the FERM domain; that stretch reads FTVRIVTMDA…GNHDLFMRRR (290 aa). Ser518 is modified (phosphoserine; by PAK).

In terms of assembly, interacts with NHERF1, HGS and AGAP2. Interacts with SGSM3. Interacts (via FERM domain) with MPP1. Interacts with LAYN and WWC1. Interacts with the CUL4A-RBX1-DDB1-VprBP/DCAF1 E3 ubiquitin-protein ligase complex. The unphosphorylated form interacts (via FERM domain) with VPRBP/DCAF1. Interacts (via FERM domain) with NOP53; the interaction is direct. Interacts with SCHIP1; the interaction is direct. Phosphorylation of Ser-518 inhibits nuclear localization by disrupting the intramolecular association of the FERM domain with the C-terminal tail. In terms of processing, ubiquitinated by the CUL4A-RBX1-DDB1-DCAF1/VprBP E3 ubiquitin-protein ligase complex for ubiquitination and subsequent proteasome-dependent degradation. Post-translationally, phosphorylation of Ser-518 inhibits nuclear localization by disrupting the intramolecular association of the FERM domain with the C-terminal tail. The dephosphorylation of Ser-518 favors the interaction with NOP53.

The protein localises to the cell membrane. The protein resides in the cell projection. It is found in the cytoplasm. It localises to the cytoskeleton. Its subcellular location is the nucleus. Functionally, probable regulator of the Hippo/SWH (Sav/Wts/Hpo) signaling pathway, a signaling pathway that plays a pivotal role in tumor suppression by restricting proliferation and promoting apoptosis. Along with WWC1 can synergistically induce the phosphorylation of LATS1 and LATS2 and can probably function in the regulation of the Hippo/SWH (Sav/Wts/Hpo) signaling pathway. May act as a membrane stabilizing protein. May inhibit PI3 kinase by binding to AGAP2 and impairing its stimulating activity. Suppresses cell proliferation and tumorigenesis by inhibiting the CUL4A-RBX1-DDB1-VprBP/DCAF1 E3 ubiquitin-protein ligase complex. In Papio anubis (Olive baboon), this protein is Merlin (NF2).